The chain runs to 117 residues: Non-specific lipid-transfer protein 1 (117 aa).

Residues 1–26 (MARAQVLLMAAALVLMLTAAPRAAVA) form the signal peptide. 4 disulfide bridges follow: Cys-29/Cys-76, Cys-39/Cys-53, Cys-54/Cys-99, and Cys-74/Cys-113. Residue Asp-33 is the site of Cis-14-hydroxy-10,13-dioxo-7-heptadecenoic acid aspartate ester attachment.

The protein belongs to the plant LTP family. In terms of tissue distribution, aleurone layer of developing and germinating seeds.

Its function is as follows. Plant non-specific lipid-transfer proteins transfer phospholipids as well as galactolipids across membranes. May play a role in wax or cutin deposition in the cell walls of expanding epidermal cells and certain secretory tissues. This Hordeum vulgare (Barley) protein is Non-specific lipid-transfer protein 1 (LTP1).